Reading from the N-terminus, the 317-residue chain is DNA-directed RNA polymerase subunit alpha (317 aa).

Residues 1–229 (MLNEFIYPDK…KHYELLENIF (229 aa)) form an alpha N-terminal domain (alpha-NTD) region. The interval 245–317 (AEKLSLSIEE…ELGMNIETQR (73 aa)) is alpha C-terminal domain (alpha-CTD).

This sequence belongs to the RNA polymerase alpha chain family. As to quaternary structure, homodimer. The RNAP catalytic core consists of 2 alpha, 1 beta, 1 beta' and 1 omega subunit. When a sigma factor is associated with the core the holoenzyme is formed, which can initiate transcription.

The enzyme catalyses RNA(n) + a ribonucleoside 5'-triphosphate = RNA(n+1) + diphosphate. DNA-dependent RNA polymerase catalyzes the transcription of DNA into RNA using the four ribonucleoside triphosphates as substrates. This chain is DNA-directed RNA polymerase subunit alpha, found in Aquifex aeolicus (strain VF5).